Reading from the N-terminus, the 151-residue chain is Large-conductance mechanosensitive channel (151 aa).

Helical transmembrane passes span 12-32 (GNIVDLAVAVVIGTAFTALVT) and 71-91 (VLLSAAINFFLIAFAVYFLVV). Residues 122 to 151 (AQTNGDSPGRHGGRGTPSPTDGPLASTESQ) form a disordered region.

Belongs to the MscL family. Homopentamer.

The protein resides in the cell membrane. Channel that opens in response to stretch forces in the membrane lipid bilayer. May participate in the regulation of osmotic pressure changes within the cell. The chain is Large-conductance mechanosensitive channel from Mycobacterium bovis (strain BCG / Pasteur 1173P2).